The following is a 96-amino-acid chain: uncharacterized protein (96 aa).

Asn-4 carries an N-linked (GlcNAc...) asparagine glycan. Residues 59-81 (VFFTIFDTIITIIVRSGIPFPLL) traverse the membrane as a helical segment.

It localises to the membrane. This is an uncharacterized protein from Saccharomyces cerevisiae (strain ATCC 204508 / S288c) (Baker's yeast).